Reading from the N-terminus, the 134-residue chain is Fluoride-specific ion channel FluC (134 aa).

The next 4 helical transmembrane spans lie at 7–27 (LAVA…TIMA), 38–58 (GTLL…IVLV), 69–89 (LFLF…AAES), and 110–130 (VGSL…LLGH). Residues glycine 77 and threonine 80 each contribute to the Na(+) site.

The protein belongs to the fluoride channel Fluc/FEX (TC 1.A.43) family.

Its subcellular location is the cell inner membrane. It carries out the reaction fluoride(in) = fluoride(out). Its activity is regulated as follows. Na(+) is not transported, but it plays an essential structural role and its presence is essential for fluoride channel function. Functionally, fluoride-specific ion channel. Important for reducing fluoride concentration in the cell, thus reducing its toxicity. This is Fluoride-specific ion channel FluC from Legionella pneumophila (strain Lens).